A 364-amino-acid polypeptide reads, in one-letter code: Transcription elongation factor, mitochondrial (364 aa).

The transit peptide at 1–39 (MAWRTNLACLIKAGGRRWFPVPEYSSLPPVLNNTCSVRK) directs the protein to the mitochondrion.

Belongs to the TEFM family. As to quaternary structure, interacts with POLRMT.

The protein resides in the mitochondrion matrix. It localises to the mitochondrion nucleoid. Its function is as follows. Transcription elongation factor which increases mitochondrial RNA polymerase processivity. Regulates transcription of the mitochondrial genome, including genes important for the oxidative phosphorylation machinery. The protein is Transcription elongation factor, mitochondrial (Tefm) of Mus musculus (Mouse).